A 626-amino-acid polypeptide reads, in one-letter code: Probable serine/threonine-protein kinase CCRP1 (626 aa).

The Protein kinase domain occupies Tyr36–Leu291. ATP-binding positions include Leu42–Cys50 and Lys65. Residue Ser71 is modified to Phosphoserine. Asp159 serves as the catalytic Proton acceptor. The tract at residues Asn399 to Ser433 is disordered. The segment covering Phe400–Gln427 has biased composition (polar residues). 2 consecutive POLO box domains span residues Trp471–Gly554 and Tyr574–Pro626.

This sequence belongs to the protein kinase superfamily. Ser/Thr protein kinase family. CDC5/Polo subfamily. Embryo.

The catalysed reaction is L-seryl-[protein] + ATP = O-phospho-L-seryl-[protein] + ADP + H(+). It carries out the reaction L-threonyl-[protein] + ATP = O-phospho-L-threonyl-[protein] + ADP + H(+). May play a role in the division of some cell types. This is Probable serine/threonine-protein kinase CCRP1 (CCRP1) from Zea mays (Maize).